We begin with the raw amino-acid sequence, 289 residues long: Glucosamine-6-phosphate deaminase 1 (289 aa).

D72 functions as the Proton acceptor; for enolization step in the catalytic mechanism. D141 acts as the For ring-opening step in catalysis. The active-site Proton acceptor; for ring-opening step is H143. E148 functions as the For ring-opening step in the catalytic mechanism. T161 is subject to Phosphothreonine.

The protein belongs to the glucosamine/galactosamine-6-phosphate isomerase family. In terms of assembly, homohexamer. As to expression, widely expressed. Detected in brain, liver, kidney, muscle, ovary, testis, spermatids and spermatozoa. In spermatids, located close to the developing acrosome vesicle. In spermatozoa, found close to the acrosomal region.

Its subcellular location is the cytoplasm. It carries out the reaction alpha-D-glucosamine 6-phosphate + H2O = beta-D-fructose 6-phosphate + NH4(+). It functions in the pathway nucleotide-sugar biosynthesis; UDP-N-acetyl-alpha-D-glucosamine biosynthesis; alpha-D-glucosamine 6-phosphate from D-fructose 6-phosphate: step 1/1. Its activity is regulated as follows. Allosterically activated by N-acetylglucosamine-6-phosphate (GlcNAc6P). Functionally, catalyzes the reversible conversion of alpha-D-glucosamine 6-phosphate (GlcN-6P) into beta-D-fructose 6-phosphate (Fru-6P) and ammonium ion, a regulatory reaction step in de novo uridine diphosphate-N-acetyl-alpha-D-glucosamine (UDP-GlcNAc) biosynthesis via hexosamine pathway. Deamination is coupled to aldo-keto isomerization mediating the metabolic flux from UDP-GlcNAc toward Fru-6P. At high ammonium level can drive amination and isomerization of Fru-6P toward hexosamines and UDP-GlcNAc synthesis. Has a role in fine tuning the metabolic fluctuations of cytosolic UDP-GlcNAc and their effects on hyaluronan synthesis that occur during tissue remodeling. Seems to trigger calcium oscillations in mammalian eggs. These oscillations serve as the essential trigger for egg activation and early development of the embryo. In Mus musculus (Mouse), this protein is Glucosamine-6-phosphate deaminase 1.